A 341-amino-acid polypeptide reads, in one-letter code: ATPase GET3 (341 aa).

34–41 (KGGVGKTT) is an ATP binding site. D63 is a catalytic residue. 2 residues coordinate ATP: E245 and N272. Zn(2+) contacts are provided by C283 and C286.

This sequence belongs to the arsA ATPase family. In terms of assembly, homodimer.

The protein resides in the cytoplasm. It is found in the endoplasmic reticulum. Functionally, ATPase required for the post-translational delivery of tail-anchored (TA) proteins to the endoplasmic reticulum. Recognizes and selectively binds the transmembrane domain of TA proteins in the cytosol. This complex then targets to the endoplasmic reticulum by membrane-bound receptors, where the tail-anchored protein is released for insertion. This process is regulated by ATP binding and hydrolysis. ATP binding drives the homodimer towards the closed dimer state, facilitating recognition of newly synthesized TA membrane proteins. ATP hydrolysis is required for insertion. Subsequently, the homodimer reverts towards the open dimer state, lowering its affinity for the membrane-bound receptor, and returning it to the cytosol to initiate a new round of targeting. This Paracoccidioides brasiliensis (strain Pb18) protein is ATPase GET3.